We begin with the raw amino-acid sequence, 242 residues long: Probable proteasome subunit alpha type-7 (242 aa).

This sequence belongs to the peptidase T1A family. The 26S proteasome consists of a 20S proteasome core and two 19S regulatory subunits. The 20S proteasome core is composed of 28 subunits that are arranged in four stacked rings, resulting in a barrel-shaped structure. The two end rings are each formed by seven alpha subunits, and the two central rings are each formed by seven beta subunits. The catalytic chamber with the active sites is on the inside of the barrel.

Its subcellular location is the cytoplasm. It is found in the nucleus. Functionally, the proteasome degrades poly-ubiquitinated proteins in the cytoplasm and in the nucleus. It is essential for the regulated turnover of proteins and for the removal of misfolded proteins. The proteasome is a multicatalytic proteinase complex that is characterized by its ability to cleave peptides with Arg, Phe, Tyr, Leu, and Glu adjacent to the leaving group at neutral or slightly basic pH. It has an ATP-dependent proteolytic activity. This chain is Probable proteasome subunit alpha type-7 (PRE10), found in Encephalitozoon cuniculi (strain GB-M1) (Microsporidian parasite).